Here is a 133-residue protein sequence, read N- to C-terminus: P2Y purinoceptor 2 (133 aa).

Residues 1–26 (ISVHRCLGVLRPLHSLRWGRARYARR) are Cytoplasmic-facing. A helical membrane pass occupies residues 27–47 (VAFAVWVLVLYCQAPVLYFVT). Residues 48-74 (TSTRSSRIICHDTSARELFSHFVAYSS) lie on the Extracellular side of the membrane. A helical transmembrane segment spans residues 75 to 95 (VMLSLLFAAPFAVILVCYVLM). Residues 96-116 (ARRLLKPAYGTSGGLPRAKRK) lie on the Cytoplasmic side of the membrane. The chain crosses the membrane as a helical span at residues 117 to 133 (SVRTIAIVLTVFVLCFL).

The protein belongs to the G-protein coupled receptor 1 family.

It is found in the cell membrane. Receptor for ATP and UTP coupled to G-proteins that activate a phosphatidylinositol-calcium second messenger system. In Bos taurus (Bovine), this protein is P2Y purinoceptor 2 (P2RY2).